The following is a 1873-amino-acid chain: Kinesin-related protein 8 (1873 aa).

Positions 13-413 (CVRVALRVRP…LKYAYRARNI (401 aa)) constitute a Kinesin motor domain. ATP is bound at residue 93-100 (GQTGSGKT). Disordered regions lie at residues 231–302 (NSPV…DERN), 463–567 (VSIP…SPTS), 778–797 (LDKDKDKDKDNKDKDQYYED), 841–891 (KIDS…ARKT), 930–1008 (KQRV…TEQL), 1179–1207 (PQPLQSQQQQQEKQQKQSNSEQVLEQRSS), 1244–1267 (LPSQQQLSSSQELAEEYTSPSTSS), 1328–1360 (TTTTTTTTNKQQVPKSFAPLNNTNNNNNNNNSS), and 1403–1467 (NNIT…PRPD). Over residues 232 to 247 (SPVTSSSTSSTSTSSS) the composition is skewed to low complexity. Positions 280–297 (IDEDEEDDEEDEDDDIMS) are enriched in acidic residues. The span at 473 to 567 (TPTLTNNNNN…NNTATPSPTS (95 aa)) shows a compositional bias: low complexity. A coiled-coil region spans residues 715–933 (FENDSEELSD…KEIEVHKQRV (219 aa)). 5 stretches are compositionally biased toward low complexity: residues 937–1005 (INSK…TPTT), 1182–1200 (LQSQQQQQEKQQKQSNSEQ), 1244–1254 (LPSQQQLSSSQ), 1348–1358 (NNTNNNNNNNN), and 1423–1454 (SLQSSPLSLSLESGLATALANNGNNNNNSNNN). 5 WD repeats span residues 1506-1546 (GHDG…NMLD), 1548-1587 (SSPGPVRSLCINGSSGCMFSGGAERTVKVWDIRSPGNTNL), 1589-1628 (IFKTPSDVNCLVTYGNYVVSGLENGTFKVWDIRHMQKPLK), 1636-1673 (HHTGTIFSMSVTSKYLVTGSRDHTINLFHRDSFVLAQK), and 1677-1714 (PHHDGVTSIAVLDDVIYSGSRDRTIKRWDVSSINNLIN). Residues 1758-1780 (NNNNNNSSNNNKSSSAPSSTTSS) form a disordered region. WD repeat units follow at residues 1805–1842 (AHNDWVNCLCIHNGMIFSGGKDSNIKGWDPLLSSNSLL) and 1844–1873 (GHESSISCLTSSKEFLFSGSTDKCIKIWKC).

It belongs to the TRAFAC class myosin-kinesin ATPase superfamily. Kinesin family.

The protein localises to the cytoplasm. The protein resides in the cytoskeleton. Its function is as follows. Microtubule-associated force-producing protein that plays a role in organelle transport. Its motor activity is directed toward the microtubule's plus end. Cooperates with kif10 and dynein to organize interphase microtubules. This chain is Kinesin-related protein 8 (kif8), found in Dictyostelium discoideum (Social amoeba).